Consider the following 356-residue polypeptide: Nicotinate-nucleotide--dimethylbenzimidazole phosphoribosyltransferase (356 aa).

Glutamate 317 acts as the Proton acceptor in catalysis.

It belongs to the CobT family. Homodimer.

It carries out the reaction 5,6-dimethylbenzimidazole + nicotinate beta-D-ribonucleotide = alpha-ribazole 5'-phosphate + nicotinate + H(+). It participates in nucleoside biosynthesis; alpha-ribazole biosynthesis; alpha-ribazole from 5,6-dimethylbenzimidazole: step 1/2. In terms of biological role, catalyzes the synthesis of alpha-ribazole-5'-phosphate from nicotinate mononucleotide (NAMN) and 5,6-dimethylbenzimidazole (DMB). The sequence is that of Nicotinate-nucleotide--dimethylbenzimidazole phosphoribosyltransferase from Salmonella agona (strain SL483).